The following is a 368-amino-acid chain: Protein-glutamate methylesterase/protein-glutamine glutaminase 1 (368 aa).

The Response regulatory domain maps to 4–121; the sequence is KVLVVDDSGF…SRNPDKVRQL (118 aa). The residue at position 55 (aspartate 55) is a 4-aspartylphosphate. Residues 138–176 are disordered; the sequence is SLPPLPSATSSSHAPASSSSVGASARVGAGASPAPASTS. Positions 144–176 are enriched in low complexity; it reads SATSSSHAPASSSSVGASARVGAGASPAPASTS. The 197-residue stretch at 172 to 368 folds into the CheB-type methylesterase domain; that stretch reads PASTSAAPKR…IGRHLVEACQ (197 aa). Active-site residues include serine 192, histidine 219, and aspartate 312.

This sequence belongs to the CheB family. Post-translationally, phosphorylated by CheA. Phosphorylation of the N-terminal regulatory domain activates the methylesterase activity.

The protein resides in the cytoplasm. It catalyses the reaction [protein]-L-glutamate 5-O-methyl ester + H2O = L-glutamyl-[protein] + methanol + H(+). The catalysed reaction is L-glutaminyl-[protein] + H2O = L-glutamyl-[protein] + NH4(+). Its function is as follows. Involved in chemotaxis. Part of a chemotaxis signal transduction system that modulates chemotaxis in response to various stimuli. Catalyzes the demethylation of specific methylglutamate residues introduced into the chemoreceptors (methyl-accepting chemotaxis proteins or MCP) by CheR. Also mediates the irreversible deamidation of specific glutamine residues to glutamic acid. The protein is Protein-glutamate methylesterase/protein-glutamine glutaminase 1 of Pseudomonas aeruginosa (strain ATCC 15692 / DSM 22644 / CIP 104116 / JCM 14847 / LMG 12228 / 1C / PRS 101 / PAO1).